Consider the following 241-residue polypeptide: Homeobox protein TGIF2LX (241 aa).

Disordered regions lie at residues 1–58 (MEAA…GNLP) and 127–207 (GKGA…ELVS). Residues 10–39 (ETQSPVQKDSPAKTQSPAQDTSIMSRNNAD) show a composition bias toward polar residues. Positions 48–111 (EHKKKRKGNL…INARRRILPD (64 aa)) form a DNA-binding region, homeobox; TALE-type.

Belongs to the TALE/TGIF homeobox family.

It is found in the nucleus. Functionally, may have a transcription role in testis. The protein is Homeobox protein TGIF2LX (TGIF2LX) of Pan paniscus (Pygmy chimpanzee).